The primary structure comprises 212 residues: ATP-dependent Clp protease proteolytic subunit (212 aa).

The active-site Nucleophile is Ser112. His137 is a catalytic residue.

This sequence belongs to the peptidase S14 family. In terms of assembly, fourteen ClpP subunits assemble into 2 heptameric rings which stack back to back to give a disk-like structure with a central cavity, resembling the structure of eukaryotic proteasomes.

The protein resides in the cytoplasm. The enzyme catalyses Hydrolysis of proteins to small peptides in the presence of ATP and magnesium. alpha-casein is the usual test substrate. In the absence of ATP, only oligopeptides shorter than five residues are hydrolyzed (such as succinyl-Leu-Tyr-|-NHMec, and Leu-Tyr-Leu-|-Tyr-Trp, in which cleavage of the -Tyr-|-Leu- and -Tyr-|-Trp bonds also occurs).. Its function is as follows. Cleaves peptides in various proteins in a process that requires ATP hydrolysis. Has a chymotrypsin-like activity. Plays a major role in the degradation of misfolded proteins. This Thiobacillus denitrificans (strain ATCC 25259 / T1) protein is ATP-dependent Clp protease proteolytic subunit.